The primary structure comprises 226 residues: Lipoprotein-releasing system ATP-binding protein LolD (226 aa).

One can recognise an ABC transporter domain in the interval Leu6 to Ile226. Residue Gly42–Ser49 coordinates ATP.

It belongs to the ABC transporter superfamily. Lipoprotein translocase (TC 3.A.1.125) family. In terms of assembly, the complex is composed of two ATP-binding proteins (LolD) and two transmembrane proteins (LolC and LolE).

The protein localises to the cell inner membrane. Functionally, part of the ABC transporter complex LolCDE involved in the translocation of mature outer membrane-directed lipoproteins, from the inner membrane to the periplasmic chaperone, LolA. Responsible for the formation of the LolA-lipoprotein complex in an ATP-dependent manner. The chain is Lipoprotein-releasing system ATP-binding protein LolD from Treponema pallidum (strain Nichols).